The chain runs to 501 residues: MSDQQLDQHELQQEENKLIAQRKEKLAAVREARAIAFPNDFRRDAYFADLQKQYADKTKEELEAAAIPVKVAGRIMLNRGSFIVLQDSSERLQVYVNRKTLPEETLAEIKTWDLGDIIGAEGVLARSGKGDLYVDMTSVRLLTKSLRPLPDKHHGLTDTEQRYRQRYVDLMVNEETRHTFRVRSQVIAHIRRFLSERGFLEVETPMLQTIPGGAAAKPFETHHNALDMAMFLRIAPELYLKRLVVGGFEKVFEINRNFRNEGVSTRHNPEFTMLEFYQAYADYEDNMDLTEELFRELAQSVLGTTDVPYGDKVFHFGEPFVRLSVFDSILKYNPEITAADLNDVEKARAIAKKAGAKVLGHEGLGKLQVMIFEELVEHKLEQPHFITRYPFEVSPLARRNDEDPSVTDRFELFIGGREIANAYSELNDAEDQAERFMLQVKEKDAGDDEAMHYDADFINALEYGMPPTAGEGIGIDRLVMLLTNSPSIRDVILFPHMRPQA.

E411 and E418 together coordinate Mg(2+).

The protein belongs to the class-II aminoacyl-tRNA synthetase family. As to quaternary structure, homodimer. It depends on Mg(2+) as a cofactor.

The protein localises to the cytoplasm. It carries out the reaction tRNA(Lys) + L-lysine + ATP = L-lysyl-tRNA(Lys) + AMP + diphosphate. This is Lysine--tRNA ligase from Pseudomonas aeruginosa (strain ATCC 15692 / DSM 22644 / CIP 104116 / JCM 14847 / LMG 12228 / 1C / PRS 101 / PAO1).